We begin with the raw amino-acid sequence, 1290 residues long: Alpha-amylase (1290 aa).

An N-terminal signal peptide occupies residues Met1–Ala31. Glu231 functions as the Nucleophile in the catalytic mechanism. Asp373 acts as the Proton donor in catalysis. A Fibronectin type-III domain is found at Val817–Gly902. The interval Gly902 to Gly978 is CBM25. Low complexity-rich tracts occupy residues Ala994–Ala1008 and Val1016–Thr1031. Residues Ala994–Thr1037 are disordered. The CBM25 stretch occupies residues Gly1092–Thr1171. Positions Thr1183–Asp1289 constitute a CBM20 domain.

This sequence belongs to the glycosyl hydrolase 119 (GH119) family.

It localises to the secreted. The catalysed reaction is Endohydrolysis of (1-&gt;4)-alpha-D-glucosidic linkages in polysaccharides containing three or more (1-&gt;4)-alpha-linked D-glucose units.. Functionally, acts on maltooligosaccharides that have a degree of polymerization (DP) of 4 or more, amylose, and soluble or raw starch to produce glucose and maltooligosaccharides up to DP5 by a hydrolysis reaction. Also acts on maltooligosyl trehaloses that have DP5 or more to produce trehalose as the major hydrolysis product. In Niallia circulans (Bacillus circulans), this protein is Alpha-amylase.